The following is a 404-amino-acid chain: MNKQIQTEADELGFFGEYGGQYVPETLMPAIIELKKAYKEAKADPEFQRELEYYLSEYVGRATPLTYAASYTESLGGAKIYLKREDLNHTGAHKINNALGQALLAKRMGKKKLVAETGAGQHGVASATVAALFDMELVVFMGSEDIKRQQLNVFRMELLGAKVVAVEEGQGTLSDAVNKALQYWVSHVDDTHYLLGSALGPDPFPTIVRDFQSVIGKEIKSQILKKEGRLPDAIVACIGGGSNAIGTFYPFIKDDVALYGVEAAGQGEDTDKHALAIGKGSPGVLHGTKMYLIQDEGGQVQLAHSISAGLDYPGIGPEHSYYHDIGRVTFENASDTQAMNALINFTKHEGIIPAIESAHALSYVERLAPTMSKEDIIVVTISGRGDKDMETIRQYMAERGLAND.

At Lys94 the chain carries N6-(pyridoxal phosphate)lysine.

Belongs to the TrpB family. As to quaternary structure, tetramer of two alpha and two beta chains. Pyridoxal 5'-phosphate serves as cofactor.

The enzyme catalyses (1S,2R)-1-C-(indol-3-yl)glycerol 3-phosphate + L-serine = D-glyceraldehyde 3-phosphate + L-tryptophan + H2O. It functions in the pathway amino-acid biosynthesis; L-tryptophan biosynthesis; L-tryptophan from chorismate: step 5/5. The beta subunit is responsible for the synthesis of L-tryptophan from indole and L-serine. The chain is Tryptophan synthase beta chain from Staphylococcus aureus (strain JH1).